A 396-amino-acid chain; its full sequence is Peroxisome proliferator-activated receptor delta (396 aa).

Positions 1 to 24 are disordered; it reads MKEEIPPRSPILDEQPSTPLEHQE. Polar residues predominate over residues 15-24; sequence QPSTPLEHQE. Positions 28–102 form a DNA-binding region, nuclear receptor; sequence SVDCKICGDR…LGMSHNAIRF (75 aa). 2 consecutive NR C4-type zinc fingers follow at residues 31 to 51 and 68 to 90; these read CKIC…CEGC and CDRN…FNKC. The 229-residue stretch at 166-394 folds into the NR LBD domain; the sequence is FVIHDMDTLW…HPLLQEIYRD (229 aa).

It belongs to the nuclear hormone receptor family. NR1 subfamily. Heterodimer with the retinoid X receptor. In terms of processing, 'Lys-48'-linked polyubiquitinated; leading to proteasomal degradation. Deubiquitinated and stabilized by OTUD3. As to expression, ubiquitous.

Its subcellular location is the nucleus. In terms of biological role, ligand-activated transcription factor key mediator of energy metabolism in adipose tissues. Receptor that binds peroxisome proliferators such as hypolipidemic drugs and fatty acids. Has a preference for poly-unsaturated fatty acids, such as gamma-linoleic acid and eicosapentanoic acid. Once activated by a ligand, the receptor binds to promoter elements of target genes. Regulates the peroxisomal beta-oxidation pathway of fatty acids. Functions as a transcription activator for the acyl-CoA oxidase gene. Decreases expression of NPC1L1 once activated by a ligand. The sequence is that of Peroxisome proliferator-activated receptor delta (ppard) from Xenopus laevis (African clawed frog).